The following is a 151-amino-acid chain: Pseudo histidine-containing phosphotransfer protein 2 (151 aa).

The 96-residue stretch at 38–133 folds into the HPt domain; sequence SPNFVEEVAA…ATLKQKLESY (96 aa).

Functions as a two-component phosphorelay mediator between cytokinin sensor histidine kinases and response regulators (B-type ARRs). Plays an important role in propagating cytokinin signal transduction. In Oryza sativa subsp. japonica (Rice), this protein is Pseudo histidine-containing phosphotransfer protein 2.